An 82-amino-acid chain; its full sequence is UPF0180 protein BH2667 (82 aa).

This sequence belongs to the UPF0180 family.

This Halalkalibacterium halodurans (strain ATCC BAA-125 / DSM 18197 / FERM 7344 / JCM 9153 / C-125) (Bacillus halodurans) protein is UPF0180 protein BH2667.